The following is a 488-amino-acid chain: ATP synthase subunit beta (488 aa).

164 to 171 lines the ATP pocket; that stretch reads GGAGVGKT.

It belongs to the ATPase alpha/beta chains family. F-type ATPases have 2 components, CF(1) - the catalytic core - and CF(0) - the membrane proton channel. CF(1) has five subunits: alpha(3), beta(3), gamma(1), delta(1), epsilon(1). CF(0) has four main subunits: a(1), b(1), b'(1) and c(9-12).

The protein localises to the cellular thylakoid membrane. It catalyses the reaction ATP + H2O + 4 H(+)(in) = ADP + phosphate + 5 H(+)(out). Produces ATP from ADP in the presence of a proton gradient across the membrane. The catalytic sites are hosted primarily by the beta subunits. This chain is ATP synthase subunit beta, found in Prochlorococcus marinus (strain MIT 9303).